A 203-amino-acid chain; its full sequence is tRNA (cytidine(56)-2'-O)-methyltransferase (203 aa).

Residues L80, 109-113 (GAEKV), and 127-134 (IGNQPHSE) contribute to the S-adenosyl-L-methionine site. The tract at residues 178-203 (AEQDKAEGKATPGKNWENSGFTGDNP) is disordered. Polar residues predominate over residues 193–203 (WENSGFTGDNP).

Belongs to the aTrm56 family. In terms of assembly, homodimer.

It is found in the cytoplasm. It carries out the reaction cytidine(56) in tRNA + S-adenosyl-L-methionine = 2'-O-methylcytidine(56) in tRNA + S-adenosyl-L-homocysteine + H(+). In terms of biological role, specifically catalyzes the AdoMet-dependent 2'-O-ribose methylation of cytidine at position 56 in tRNAs. The sequence is that of tRNA (cytidine(56)-2'-O)-methyltransferase from Pyrococcus horikoshii (strain ATCC 700860 / DSM 12428 / JCM 9974 / NBRC 100139 / OT-3).